A 128-amino-acid polypeptide reads, in one-letter code: Ribonuclease P protein component (128 aa).

Belongs to the RnpA family. In terms of assembly, consists of a catalytic RNA component (M1 or rnpB) and a protein subunit.

It carries out the reaction Endonucleolytic cleavage of RNA, removing 5'-extranucleotides from tRNA precursor.. In terms of biological role, RNaseP catalyzes the removal of the 5'-leader sequence from pre-tRNA to produce the mature 5'-terminus. It can also cleave other RNA substrates such as 4.5S RNA. The protein component plays an auxiliary but essential role in vivo by binding to the 5'-leader sequence and broadening the substrate specificity of the ribozyme. In Prochlorococcus marinus (strain NATL1A), this protein is Ribonuclease P protein component.